The primary structure comprises 662 residues: Carboxysome assembly protein CsoS2 (662 aa).

The interval M1–Q227 is N-terminal domain. 3 disordered regions span residues M1–G258, N277–A322, and P342–C419. One copy of the N-repeat 1 repeat lies at S8–T27. 2 stretches are compositionally biased toward low complexity: residues A28–S57 and S64–A76. The stretch at R58 to A72 is one N-repeat 2 repeat. The span at R120 to T135 shows a compositional bias: basic and acidic residues. A compositionally biased stretch (polar residues) spans V141–L150. One copy of the N-repeat 3 repeat lies at S147–A168. Composition is skewed to low complexity over residues K161 to K170, G237 to Q247, and V289 to V300. 5 M-repeat repeats span residues K228 to C278, K288 to C338, K388 to C436, K446 to F491, and V496 to C550. The tract at residues K228–G559 is middle region. The span at P391–Q404 shows a compositional bias: polar residues. The interval E560 to P631 is C-terminal domain. The stretch at P564–P572 is one C-repeat 1 repeat. Disordered regions lie at residues K588–W607 and A619–A662. The interval V632–A662 is C-terminal peptide. A compositionally biased stretch (polar residues) spans I641–T650.

Belongs to the CsoS2 family. In terms of assembly, interacts via its N-terminal repeats with RuBisCO. Interacts with the major shell protein CsoS1. Unlike H.neapolitanus and predictions for P.marinus strain MIT 9313, this protein is not thought to have ribosomal frameshifting.

It is found in the carboxysome. Required for alpha-carboxysome (Cb) assembly, mediates interaction between RuBisCO and the Cb shell. The protein is probably intrinsically disordered. The C-terminal repeats act as the encapsulation signal to target proteins to the Cb; they are necessary and sufficient to target both CsoS2 and foreign proteins to the Cb. The N-terminal repeats of this protein bind simultaneously to both subunits of RuBisCO. Probably also interacts with the major shell proteins (CsoS1); that interaction would increase the local concentration of CsoS2 so that it can condense RuBisCO and full carboxysomes can be formed. The protein is Carboxysome assembly protein CsoS2 of Hydrogenovibrio crunogenus (strain DSM 25203 / XCL-2) (Thiomicrospira crunogena).